Here is a 404-residue protein sequence, read N- to C-terminus: Cysteine desulfurase IscS (404 aa).

Pyridoxal 5'-phosphate contacts are provided by residues 75-76 (AT), Asn-155, Gln-183, and 203-205 (SAH). Lys-206 carries the post-translational modification N6-(pyridoxal phosphate)lysine. A pyridoxal 5'-phosphate-binding site is contributed by Thr-243. Cys-328 (cysteine persulfide intermediate) is an active-site residue. [2Fe-2S] cluster is bound at residue Cys-328.

This sequence belongs to the class-V pyridoxal-phosphate-dependent aminotransferase family. NifS/IscS subfamily. Homodimer. Forms a heterotetramer with IscU, interacts with other sulfur acceptors. Requires pyridoxal 5'-phosphate as cofactor.

It is found in the cytoplasm. The enzyme catalyses (sulfur carrier)-H + L-cysteine = (sulfur carrier)-SH + L-alanine. Its pathway is cofactor biosynthesis; iron-sulfur cluster biosynthesis. Its function is as follows. Master enzyme that delivers sulfur to a number of partners involved in Fe-S cluster assembly, tRNA modification or cofactor biosynthesis. Catalyzes the removal of elemental sulfur atoms from cysteine to produce alanine. Functions as a sulfur delivery protein for Fe-S cluster synthesis onto IscU, an Fe-S scaffold assembly protein, as well as other S acceptor proteins. The chain is Cysteine desulfurase IscS from Pseudomonas aeruginosa (strain UCBPP-PA14).